The following is a 256-amino-acid chain: Eukaryotic translation initiation factor 3 subunit J (256 aa).

Positions 1 to 67 (MAAAAAGDSD…KEEAEVKPEV (67 aa)) are sufficient for interaction with EIF3B. Positions 1 to 106 (MAAAAAGDSD…LEEPEEPKVL (106 aa)) are disordered. Phosphoserine occurs at positions 9, 11, and 18. Residues 38–57 (EGEDEDEDVKDNWDDDDDEK) show a composition bias toward acidic residues. The span at 58 to 104 (KEEAEVKPEVKISEKKKIAEKIKEKERQQKKRQEEIKKRLEEPEEPK) shows a compositional bias: basic and acidic residues. Residues 68–133 (KISEKKKIAE…ESDLELAKET (66 aa)) are a coiled coil. Residue K104 forms a Glycyl lysine isopeptide (Lys-Gly) (interchain with G-Cter in SUMO2) linkage. A Phosphothreonine modification is found at T107. S125 bears the Phosphoserine mark. The interval 214-243 (QSKAKKKKKGVVPGGGLKATMKDDLADYGG) is disordered. The interval 241-256 (YGGYDGGYAQDYEDFM) is promotes stable association with the 40S ribosome. Y252 carries the post-translational modification Phosphotyrosine.

This sequence belongs to the eIF-3 subunit J family. Component of the eukaryotic translation initiation factor 3 (eIF-3) complex, which is composed of 13 subunits: EIF3A, EIF3B, EIF3C, EIF3D, EIF3E, EIF3F, EIF3G, EIF3H, EIF3I, EIF3J, EIF3K, EIF3L and EIF3M. The eIF-3 complex appears to include 3 stable modules: module A is composed of EIF3A, EIF3B, EIF3G and EIF3I; module B is composed of EIF3F, EIF3H, and EIF3M; and module C is composed of EIF3C, EIF3D, EIF3E, EIF3K and EIF3L. EIF3C of module C binds EIF3B of module A and EIF3H of module B, thereby linking the three modules. EIF3J is a labile subunit that binds to the eIF-3 complex via EIF3B. The eIF-3 complex interacts with RPS6KB1 under conditions of nutrient depletion. Mitogenic stimulation leads to binding and activation of a complex composed of MTOR and RPTOR, leading to phosphorylation and release of RPS6KB1 and binding of EIF4B to eIF-3. In terms of processing, phosphorylated. Phosphorylation is enhanced upon serum stimulation.

The protein resides in the cytoplasm. Its function is as follows. Component of the eukaryotic translation initiation factor 3 (eIF-3) complex, which is required for several steps in the initiation of protein synthesis. The eIF-3 complex associates with the 40S ribosome and facilitates the recruitment of eIF-1, eIF-1A, eIF-2:GTP:methionyl-tRNAi and eIF-5 to form the 43S pre-initiation complex (43S PIC). The eIF-3 complex stimulates mRNA recruitment to the 43S PIC and scanning of the mRNA for AUG recognition. The eIF-3 complex is also required for disassembly and recycling of post-termination ribosomal complexes and subsequently prevents premature joining of the 40S and 60S ribosomal subunits prior to initiation. The eIF-3 complex specifically targets and initiates translation of a subset of mRNAs involved in cell proliferation, including cell cycling, differentiation and apoptosis, and uses different modes of RNA stem-loop binding to exert either translational activation or repression. This subunit binds directly within the mRNA entry channel of the 40S ribosome to the aminoacyl (A) site. It may regulate the interaction between the 43S PIC and mRNA. This is Eukaryotic translation initiation factor 3 subunit J from Bos taurus (Bovine).